Reading from the N-terminus, the 103-residue chain is N(4)-acetylcytidine amidohydrolase (103 aa).

The ASCH domain maps to 6 to 92 (TFFERFEQDI…VIQEIYPGLE (87 aa)). Lys20 serves as the catalytic Proton acceptor. Thr23 (nucleophile) is an active-site residue. The active-site Proton donor is Glu73.

The protein belongs to the N(4)-acetylcytidine amidohydrolase family.

The enzyme catalyses N(4)-acetylcytidine + H2O = cytidine + acetate + H(+). It carries out the reaction N(4)-acetyl-2'-deoxycytidine + H2O = 2'-deoxycytidine + acetate + H(+). It catalyses the reaction N(4)-acetylcytosine + H2O = cytosine + acetate + H(+). Catalyzes the hydrolysis of N(4)-acetylcytidine (ac4C). This Shewanella sp. (strain MR-4) protein is N(4)-acetylcytidine amidohydrolase.